Consider the following 131-residue polypeptide: Ribonuclease P protein component (131 aa).

It belongs to the RnpA family. Consists of a catalytic RNA component (M1 or rnpB) and a protein subunit.

The enzyme catalyses Endonucleolytic cleavage of RNA, removing 5'-extranucleotides from tRNA precursor.. RNaseP catalyzes the removal of the 5'-leader sequence from pre-tRNA to produce the mature 5'-terminus. It can also cleave other RNA substrates such as 4.5S RNA. The protein component plays an auxiliary but essential role in vivo by binding to the 5'-leader sequence and broadening the substrate specificity of the ribozyme. This Synechococcus sp. (strain WH7803) protein is Ribonuclease P protein component.